The primary structure comprises 267 residues: Indole-3-glycerol phosphate synthase (267 aa).

Belongs to the TrpC family.

It catalyses the reaction 1-(2-carboxyphenylamino)-1-deoxy-D-ribulose 5-phosphate + H(+) = (1S,2R)-1-C-(indol-3-yl)glycerol 3-phosphate + CO2 + H2O. It functions in the pathway amino-acid biosynthesis; L-tryptophan biosynthesis; L-tryptophan from chorismate: step 4/5. The chain is Indole-3-glycerol phosphate synthase from Ralstonia pickettii (strain 12J).